Reading from the N-terminus, the 353-residue chain is Trans-enoyl reductase eqxC (353 aa).

45 to 48 (VDTK) contacts NADP(+). 131–138 (ISFMTTGL) contributes to the substrate binding site. NADP(+) is bound by residues 166–169 (SSAT), 189–192 (SPRN), Y207, and 254–255 (LE). Residue 275–279 (GPQML) participates in substrate binding. 344-345 (IS) contacts NADP(+).

It belongs to the zinc-containing alcohol dehydrogenase family. In terms of assembly, monomer.

It catalyses the reaction L-serine + 7 malonyl-CoA + acetyl-CoA + 2 S-adenosyl-L-methionine + ATP + 8 NADPH + 11 H(+) = (5S)-3-[(2E,6R,8E,10E,12E)-2,6-dimethyltetradeca-2,8,10,12-tetraenoyl]-5-(hydroxymethyl)pyrrolidine-2,4-dione + AMP + 2 S-adenosyl-L-homocysteine + 7 CO2 + diphosphate + 8 NADP(+) + 8 CoA + 6 H2O. The protein operates within mycotoxin biosynthesis. Its function is as follows. Trans-enoyl reductase; part of the gene cluster that mediates the biosynthesis of equisetin, a trans-fused decalin-containing tetramic acid with antimicrobial activity. The PKS module of eqxS together with the enoylreductase eqxC catalyze the formation of the polyketide unit which is then conjugated to L-serine by the condensation domain of the eqxS NRPS module. Activity of the Dieckmann cyclase domain (RED) results in release of the Dieckmann product intermediate. Diels-Alderase eqx3 is involved in endo-selective Diels-Alder cycloaddition to form the decalin ring, leading to the production of N-desmethylequisetin also called trichosetin. Subsequent N-methylation is carried out by eqxD to give equisetin. This is Trans-enoyl reductase eqxC from Fusarium heterosporum.